We begin with the raw amino-acid sequence, 444 residues long: MSYKMFGRCRTACFRSPNLFAANKGMPLQASVAGGASRYIIGTASVLVGAMAGFYIMNSRSAIHEYVSCPLVRLVTPDAEDGHKLGIWFLKYGLAPKLMFDKDDPVLKVEVFGKTMSNPIGCAAGLDKDGEAIDGIAQSGFGYVEIGTVTPLAQPGNPKPRFFRLPMDEAVINRYGFNSSGHKKVYDNVLSRVRQFLGAYFRDDTVNSLALYKDKLLGINLGKNKNGDEVEDYLRGVEKFQSLADVLVINVSSPNTPGLRDLQQEGRLTELLSMIVAKRNSLINEGNVLGASTHKPPVLVKIAPDLTEPELQSIAEAAKKSSIDGIIVSNTTIQRPDSLYTVDEELKNQAGGLSGKPVKPFALKALRTIHQYTKDTNLVLVGCGGISSGQDAIEFAKAGAHFVQLYTAYAYRGPGLIARIKDEVTEELRNEGKTWMEIIGQDAK.

A helical membrane pass occupies residues 34 to 56 (GGASRYIIGTASVLVGAMAGFYI). FMN contacts are provided by residues 124 to 128 (AGLDK) and T148. K128 contacts substrate. Substrate is bound at residue 173–177 (NRYGF). FMN-binding residues include N220 and N250. 250–255 (NVSSPN) is a binding site for substrate. The active-site Nucleophile is the S253. Residues K301 and S329 each contribute to the FMN site. 330–331 (NT) contacts substrate. FMN is bound by residues G355, G385, and 406-407 (YT).

This sequence belongs to the dihydroorotate dehydrogenase family. Type 2 subfamily. It depends on FMN as a cofactor.

It localises to the mitochondrion inner membrane. It catalyses the reaction (S)-dihydroorotate + a quinone = orotate + a quinol. Its pathway is pyrimidine metabolism; UMP biosynthesis via de novo pathway; orotate from (S)-dihydroorotate (quinone route): step 1/1. Its function is as follows. Catalyzes the conversion of dihydroorotate to orotate with quinone as electron acceptor. The polypeptide is Dihydroorotate dehydrogenase (quinone), mitochondrial (URA9) (Eremothecium gossypii (strain ATCC 10895 / CBS 109.51 / FGSC 9923 / NRRL Y-1056) (Yeast)).